The primary structure comprises 127 residues: Large ribosomal subunit protein eL8 (127 aa).

Belongs to the eukaryotic ribosomal protein eL8 family. In terms of assembly, part of the 50S ribosomal subunit. Probably part of the RNase P complex.

Its subcellular location is the cytoplasm. In terms of biological role, multifunctional RNA-binding protein that recognizes the K-turn motif in ribosomal RNA, the RNA component of RNase P, box H/ACA, box C/D and box C'/D' sRNAs. The sequence is that of Large ribosomal subunit protein eL8 from Aeropyrum pernix (strain ATCC 700893 / DSM 11879 / JCM 9820 / NBRC 100138 / K1).